Here is a 115-residue protein sequence, read N- to C-terminus: Cobalt-zinc-cadmium resistance protein CzcI (115 aa).

An N-terminal signal peptide occupies residues 1 to 20; it reads MRRFVLIFVLLILPFQFSWA. Residues 93–102 are compositionally biased toward polar residues; that stretch reads QHSSEFSSLN. A disordered region spans residues 93–115; the sequence is QHSSEFSSLNARAPDRPQWQRLA.

Its subcellular location is the periplasm. Component of the czc cation-efflux system that confers resistance to cobalt, zinc and cadmium. May have a regulatory function. The protein is Cobalt-zinc-cadmium resistance protein CzcI (czcI) of Cupriavidus metallidurans (strain ATCC 43123 / DSM 2839 / NBRC 102507 / CH34) (Ralstonia metallidurans).